Here is a 217-residue protein sequence, read N- to C-terminus: 3,4-dihydroxy-2-butanone 4-phosphate synthase (217 aa).

Residues 37–38, aspartate 42, 150–154, and glutamate 174 each bind D-ribulose 5-phosphate; these read RE and RQGHT. Glutamate 38 contacts Mg(2+). Mg(2+) is bound at residue histidine 153.

Belongs to the DHBP synthase family. Homodimer. Mg(2+) serves as cofactor. The cofactor is Mn(2+).

It catalyses the reaction D-ribulose 5-phosphate = (2S)-2-hydroxy-3-oxobutyl phosphate + formate + H(+). It participates in cofactor biosynthesis; riboflavin biosynthesis; 2-hydroxy-3-oxobutyl phosphate from D-ribulose 5-phosphate: step 1/1. In terms of biological role, catalyzes the conversion of D-ribulose 5-phosphate to formate and 3,4-dihydroxy-2-butanone 4-phosphate. The polypeptide is 3,4-dihydroxy-2-butanone 4-phosphate synthase (Desulforamulus reducens (strain ATCC BAA-1160 / DSM 100696 / MI-1) (Desulfotomaculum reducens)).